Consider the following 406-residue polypeptide: Ribulose bisphosphate carboxylase large chain (406 aa).

The substrate site is built by N101 and T151. The active-site Proton acceptor is K153. A substrate-binding site is contributed by K155. Mg(2+)-binding residues include K179, D181, and E182. An N6-carboxylysine modification is found at K179. H272 functions as the Proton acceptor in the catalytic mechanism. R273, H305, and S357 together coordinate substrate.

Belongs to the RuBisCO large chain family. Type I subfamily. In terms of assembly, heterohexadecamer of 8 large chains and 8 small chains; disulfide-linked. The disulfide link is formed within the large subunit homodimers. Mg(2+) is required as a cofactor. In terms of processing, the disulfide bond which can form in the large chain dimeric partners within the hexadecamer appears to be associated with oxidative stress and protein turnover.

The protein resides in the plastid. It localises to the chloroplast. It catalyses the reaction 2 (2R)-3-phosphoglycerate + 2 H(+) = D-ribulose 1,5-bisphosphate + CO2 + H2O. It carries out the reaction D-ribulose 1,5-bisphosphate + O2 = 2-phosphoglycolate + (2R)-3-phosphoglycerate + 2 H(+). In terms of biological role, ruBisCO catalyzes two reactions: the carboxylation of D-ribulose 1,5-bisphosphate, the primary event in carbon dioxide fixation, as well as the oxidative fragmentation of the pentose substrate in the photorespiration process. Both reactions occur simultaneously and in competition at the same active site. The polypeptide is Ribulose bisphosphate carboxylase large chain (rbcL) (Trichomanes striatum (Fern)).